An 847-amino-acid chain; its full sequence is Nitrite reductase (NADH) large subunit (847 aa).

44 to 79 (YDRVHLSSYFSHHTAEELSLVREGFYEKHGIKVLVG) provides a ligand contact to FAD. 193–225 (LRRKIESMGVRVHTSKNTLEIVQEGVEARKTMR) lines the NAD(+) pocket. Cysteine 425, cysteine 427, cysteine 459, and cysteine 462 together coordinate [2Fe-2S] cluster. [4Fe-4S] cluster contacts are provided by cysteine 641, cysteine 647, cysteine 681, and cysteine 685. A siroheme-binding site is contributed by cysteine 685.

Belongs to the nitrite and sulfite reductase 4Fe-4S domain family. Homodimer which associates with NirD. Requires siroheme as cofactor. The cofactor is [2Fe-2S] cluster. [4Fe-4S] cluster serves as cofactor. It depends on FAD as a cofactor.

It catalyses the reaction NH4(+) + 3 NAD(+) + 2 H2O = nitrite + 3 NADH + 5 H(+). The protein operates within nitrogen metabolism; nitrate reduction (assimilation). This is Nitrite reductase (NADH) large subunit (nirB) from Escherichia coli (strain K12).